Here is a 427-residue protein sequence, read N- to C-terminus: 3-phosphoshikimate 1-carboxyvinyltransferase (427 aa).

The 3-phosphoshikimate site is built by Lys20, Ser21, and Arg25. Position 20 (Lys20) interacts with phosphoenolpyruvate. Phosphoenolpyruvate-binding residues include Gly92 and Arg120. Residues Ser166, Gln168, Asp312, and Lys339 each contribute to the 3-phosphoshikimate site. Gln168 contacts phosphoenolpyruvate. The Proton acceptor role is filled by Asp312. Phosphoenolpyruvate-binding residues include Arg343 and Arg385.

This sequence belongs to the EPSP synthase family. As to quaternary structure, monomer.

The protein resides in the cytoplasm. The catalysed reaction is 3-phosphoshikimate + phosphoenolpyruvate = 5-O-(1-carboxyvinyl)-3-phosphoshikimate + phosphate. The protein operates within metabolic intermediate biosynthesis; chorismate biosynthesis; chorismate from D-erythrose 4-phosphate and phosphoenolpyruvate: step 6/7. Functionally, catalyzes the transfer of the enolpyruvyl moiety of phosphoenolpyruvate (PEP) to the 5-hydroxyl of shikimate-3-phosphate (S3P) to produce enolpyruvyl shikimate-3-phosphate and inorganic phosphate. This Streptococcus sanguinis (strain SK36) protein is 3-phosphoshikimate 1-carboxyvinyltransferase.